Consider the following 253-residue polypeptide: Tetraspanin-11 (253 aa).

Transmembrane regions (helical) follow at residues 19-39 (LLFIFNFFFWVGGAAVMAVGI), 63-83 (VLIFVGGLVMTTGFLGFGAII), 93-113 (YFCLLLAIFLVELVAGVLAHV), and 220-240 (LLLMGAVGIGVACLQICGMVL).

Belongs to the tetraspanin (TM4SF) family.

The protein localises to the membrane. The protein is Tetraspanin-11 (Tspan11) of Rattus norvegicus (Rat).